Consider the following 369-residue polypeptide: MLEPQDQKKLDELFSSMQEANGCFLGYPFAKDFDYEPLWRFMSLTGNNLGDPFEPGTYRVNSHAFECDVVDFFARLFRACSCEVWGYVTNGGTEGNIYGLYLARELYPNAVAYFSQDTHYSVSKGVRLLRLEHSVVRSQSNGEINYDDLAQKATRYRTRPAVVVANIGTTMKEGKDDTLKIRAVLHDVGISAIYVHSDAALCGPYAPLLNPKPAFDFADGADSITLSGHKFLGAPMPCGVVLSHKLHVQRVMRNIDYIGSSDTTLSGSRNAFTPIILWYAIRSLGIEGIKQTFQQCERLAAYTADELNVRGVSAWRNPNALTVVLPPVEDSIKTKWQIATQDVSHLVVTPGTTKQQADALIETISNRNR.

His-119 is a binding site for substrate. Position 230 is an N6-(pyridoxal phosphate)lysine (Lys-230).

It belongs to the group II decarboxylase family. In terms of assembly, homotetramer. It depends on pyridoxal 5'-phosphate as a cofactor.

It carries out the reaction L-histidine + H(+) = histamine + CO2. In Mesorhizobium japonicum (strain LMG 29417 / CECT 9101 / MAFF 303099) (Mesorhizobium loti (strain MAFF 303099)), this protein is Histidine decarboxylase.